Reading from the N-terminus, the 136-residue chain is ATP synthase epsilon chain 2 (136 aa).

Belongs to the ATPase epsilon chain family. In terms of assembly, F-type ATPases have 2 components, CF(1) - the catalytic core - and CF(0) - the membrane proton channel. CF(1) has five subunits: alpha(3), beta(3), gamma(1), delta(1), epsilon(1). CF(0) has three main subunits: a, b and c.

Its subcellular location is the cell inner membrane. Produces ATP from ADP in the presence of a proton gradient across the membrane. The polypeptide is ATP synthase epsilon chain 2 (Nitrobacter hamburgensis (strain DSM 10229 / NCIMB 13809 / X14)).